The following is a 445-amino-acid chain: Maltoporin (445 aa).

An N-terminal signal peptide occupies residues 1–25; sequence MKMKAKWLPIAAGVTAALASQAAFA.

It belongs to the porin LamB (TC 1.B.3) family. Homotrimer formed of three 18-stranded antiparallel beta-barrels, containing three independent channels.

It is found in the cell outer membrane. The enzyme catalyses beta-maltose(in) = beta-maltose(out). In terms of biological role, involved in the transport of maltose and maltodextrins. This Aeromonas salmonicida protein is Maltoporin.